The chain runs to 569 residues: Glutamine--tRNA ligase (569 aa).

Positions Met1–Val23 are disordered. Residues Pro50–His60 carry the 'HIGH' region motif. ATP-binding positions include Glu51 to Asn53 and His57 to Ser63. 2 residues coordinate L-glutamine: Asp83 and Tyr228. ATP-binding positions include Thr247 and Arg277 to Leu278. Residues Ile284–Arg288 carry the 'KMSKS' region motif.

It belongs to the class-I aminoacyl-tRNA synthetase family. In terms of assembly, monomer.

Its subcellular location is the cytoplasm. It catalyses the reaction tRNA(Gln) + L-glutamine + ATP = L-glutaminyl-tRNA(Gln) + AMP + diphosphate. The chain is Glutamine--tRNA ligase from Pseudomonas syringae pv. tomato (strain ATCC BAA-871 / DC3000).